A 132-amino-acid chain; its full sequence is Histone H2B.1 (132 aa).

Residues 1 to 13 are compositionally biased toward low complexity; the sequence is MSSKASKAPASKA. Positions 1-40 are disordered; sequence MSSKASKAPASKAPAEKKPAAKKTSSSVDASKKRTKTRKE. Position 7 is an N6-acetyllysine; alternate (Lys-7). A Glycyl lysine isopeptide (Lys-Gly) (interchain with G-Cter in SUMO); alternate cross-link involves residue Lys-7. Ser-11 carries the phosphoserine modification. Residue Lys-12 is modified to N6-acetyllysine. Residue Lys-17 is modified to N6-acetyllysine; alternate. A Glycyl lysine isopeptide (Lys-Gly) (interchain with G-Cter in SUMO); alternate cross-link involves residue Lys-17. Lys-18 is covalently cross-linked (Glycyl lysine isopeptide (Lys-Gly) (interchain with G-Cter in SUMO)). Lys-125 participates in a covalent cross-link: Glycyl lysine isopeptide (Lys-Gly) (interchain with G-Cter in ubiquitin).

This sequence belongs to the histone H2B family. As to quaternary structure, the nucleosome is a histone octamer containing two molecules each of H2A, H2B, H3 and H4 assembled in one H3-H4 heterotetramer and two H2A-H2B heterodimers. The octamer wraps approximately 147 bp of DNA. Monoubiquitinated by the UBC2-BRE1 complex to form H2BK123ub1. H2BK123ub1 gives a specific tag for epigenetic transcriptional activation and is also prerequisite for H3K4me and H3K79me formation. H2BK123ub1 also modulates the formation of double-strand breaks during meiosis and is a prerequisite for DNA-damage checkpoint activation. Post-translationally, phosphorylated by STE20 to form H2BS10ph during progression through meiotic prophase. May be correlated with chromosome condensation. In terms of processing, acetylated by GCN5 to form H2BK11ac and H2BK16ac. H2BK16ac can also be formed by ESA1. Acetylation of N-terminal lysines and particularly formation of H2BK11acK16ac has a positive effect on transcription. Sumoylation to form H2BK6su and probably also H2BK16su or H2BK17su, occurs preferentially near the telomeres and represses gene transcription.

The protein localises to the nucleus. The protein resides in the chromosome. Core component of nucleosome. Nucleosomes wrap and compact DNA into chromatin, limiting DNA accessibility to the cellular machineries which require DNA as a template. Histones thereby play a central role in transcription regulation, DNA repair, DNA replication and chromosomal stability. DNA accessibility is regulated via a complex set of post-translational modifications of histones, also called histone code, and nucleosome remodeling. The chain is Histone H2B.1 (HTB1) from Eremothecium gossypii (strain ATCC 10895 / CBS 109.51 / FGSC 9923 / NRRL Y-1056) (Yeast).